We begin with the raw amino-acid sequence, 317 residues long: Acetyl-coenzyme A carboxylase carboxyl transferase subunit alpha (317 aa).

The CoA carboxyltransferase C-terminal domain maps to 40 to 293 (LEVRVREAIV…GDVIANALGE (254 aa)).

This sequence belongs to the AccA family. As to quaternary structure, acetyl-CoA carboxylase is a heterohexamer composed of biotin carboxyl carrier protein (AccB), biotin carboxylase (AccC) and two subunits each of ACCase subunit alpha (AccA) and ACCase subunit beta (AccD).

The protein resides in the cytoplasm. The enzyme catalyses N(6)-carboxybiotinyl-L-lysyl-[protein] + acetyl-CoA = N(6)-biotinyl-L-lysyl-[protein] + malonyl-CoA. The protein operates within lipid metabolism; malonyl-CoA biosynthesis; malonyl-CoA from acetyl-CoA: step 1/1. Its function is as follows. Component of the acetyl coenzyme A carboxylase (ACC) complex. First, biotin carboxylase catalyzes the carboxylation of biotin on its carrier protein (BCCP) and then the CO(2) group is transferred by the carboxyltransferase to acetyl-CoA to form malonyl-CoA. This is Acetyl-coenzyme A carboxylase carboxyl transferase subunit alpha from Rhizobium leguminosarum bv. trifolii (strain WSM2304).